The following is an 850-amino-acid chain: AdoMet-dependent rRNA methyltransferase SPB1 (850 aa).

The S-adenosyl-L-methionine site is built by G58, W60, D78, D94, and D119. K159 functions as the Proton acceptor in the catalytic mechanism. A compositionally biased stretch (polar residues) spans 273–282 (GETNEMTWTP). 4 disordered regions span residues 273–305 (GETN…ARDE), 388–414 (IDKE…NEMK), 529–569 (GISD…RTLN), and 620–646 (AKKN…KQDD). The segment covering 388 to 400 (IDKELSELGEREK) has biased composition (basic and acidic residues). A coiled-coil region spans residues 397–425 (EREKARKKRERRRRNEMKQREIQRMQMNM). Over residues 401–411 (ARKKRERRRRN) the composition is skewed to basic residues. Composition is skewed to acidic residues over residues 537–561 (DESD…DEDD) and 628–638 (SDSEDEEDDIV). Residues 746-773 (LEAKGRKKMRALRRLEQMKKKSELINED) are a coiled coil. The segment at 811–850 (KNKGIAGRPRGVTGKYKMVDGTMKKEQRAIRRIKKKMGKK) is disordered. Over residues 840 to 850 (IRRIKKKMGKK) the composition is skewed to basic residues.

This sequence belongs to the class I-like SAM-binding methyltransferase superfamily. RNA methyltransferase RlmE family. SPB1 subfamily. In terms of assembly, component of the nucleolar and nucleoplasmic pre-60S ribosomal particle.

The protein resides in the nucleus. Its subcellular location is the nucleolus. The catalysed reaction is a ribonucleotide in rRNA + S-adenosyl-L-methionine = a 2'-O-methylribonucleotide in rRNA + S-adenosyl-L-homocysteine + H(+). Its function is as follows. Required for proper assembly of pre-ribosomal particles during the biogenesis of the 60S ribosomal subunit. The sequence is that of AdoMet-dependent rRNA methyltransferase SPB1 from Yarrowia lipolytica (strain CLIB 122 / E 150) (Yeast).